The chain runs to 116 residues: Large ribosomal subunit protein bL19 (116 aa).

This sequence belongs to the bacterial ribosomal protein bL19 family.

Its function is as follows. This protein is located at the 30S-50S ribosomal subunit interface and may play a role in the structure and function of the aminoacyl-tRNA binding site. The protein is Large ribosomal subunit protein bL19 of Mannheimia succiniciproducens (strain KCTC 0769BP / MBEL55E).